The following is a 398-amino-acid chain: Succinate--CoA ligase [ADP-forming] subunit beta (398 aa).

The ATP-grasp domain maps to 9-254; the sequence is KALLGEFGVP…ETEEDAKEIE (246 aa). ATP is bound by residues Lys46, 53–55, Glu109, Ser112, and Glu117; that span reads GRG. Mg(2+) contacts are provided by Asn209 and Asp223. Substrate-binding positions include Asn274 and 331 to 333; that span reads GIM.

This sequence belongs to the succinate/malate CoA ligase beta subunit family. Heterotetramer of two alpha and two beta subunits. The cofactor is Mg(2+).

The enzyme catalyses succinate + ATP + CoA = succinyl-CoA + ADP + phosphate. The catalysed reaction is GTP + succinate + CoA = succinyl-CoA + GDP + phosphate. It participates in carbohydrate metabolism; tricarboxylic acid cycle; succinate from succinyl-CoA (ligase route): step 1/1. Functionally, succinyl-CoA synthetase functions in the citric acid cycle (TCA), coupling the hydrolysis of succinyl-CoA to the synthesis of either ATP or GTP and thus represents the only step of substrate-level phosphorylation in the TCA. The beta subunit provides nucleotide specificity of the enzyme and binds the substrate succinate, while the binding sites for coenzyme A and phosphate are found in the alpha subunit. The chain is Succinate--CoA ligase [ADP-forming] subunit beta from Bradyrhizobium diazoefficiens (strain JCM 10833 / BCRC 13528 / IAM 13628 / NBRC 14792 / USDA 110).